The following is a 364-amino-acid chain: Protein BRI1-5 ENHANCED 1 (364 aa).

The span at 1–11 (MVREEQEEDDN) shows a compositional bias: acidic residues. The disordered stretch occupies residues 1–22 (MVREEQEEDDNNNNNNGGGERK). Residues 44-49 (GGSGFV), arginine 69, 98-99 (DL), tyrosine 202, lysine 206, valine 232, and serine 244 contribute to the NADP(+) site. Lysine 206 serves as the catalytic Proton donor.

Belongs to the NAD(P)-dependent epimerase/dehydratase family. Monomer. As to expression, mainly present in cell elongating-containing tissues. Strongly expressed in roots and flowers, also observed in petioles, stems, leaves and siliques.

Its subcellular location is the cytoplasm. It participates in plant hormone biosynthesis; brassinosteroid biosynthesis. In terms of biological role, element of the brassinosteroid metabolic pathway that regulates typhasterol (TY), castasterone (CS) and brassinolide (BL) levels. Involved in the control of organ elongation. The sequence is that of Protein BRI1-5 ENHANCED 1 from Arabidopsis thaliana (Mouse-ear cress).